A 594-amino-acid polypeptide reads, in one-letter code: Probable translation initiation factor IF-2 (594 aa).

In terms of domain architecture, tr-type G spans 3–220 (IRSPIVSVLG…MLMGLAQQYL (218 aa)). Residues 12-19 (GHVDHGKT) are G1. 12–19 (GHVDHGKT) is a binding site for GTP. Positions 37–41 (GITQH) are G2. The interval 76 to 79 (DTPG) is G3. GTP is bound by residues 76–80 (DTPGH) and 130–133 (NKID). The interval 130–133 (NKID) is G4. Residues 198 to 200 (SAI) are G5.

The protein belongs to the TRAFAC class translation factor GTPase superfamily. Classic translation factor GTPase family. IF-2 subfamily.

In terms of biological role, function in general translation initiation by promoting the binding of the formylmethionine-tRNA to ribosomes. Seems to function along with eIF-2. The polypeptide is Probable translation initiation factor IF-2 (infB) (Methanothermobacter thermautotrophicus (strain ATCC 29096 / DSM 1053 / JCM 10044 / NBRC 100330 / Delta H) (Methanobacterium thermoautotrophicum)).